The sequence spans 302 residues: N-acetylmuramic acid 6-phosphate etherase (302 aa).

Residues 57–220 (VSEKLKNNGR…TTAVMIKLGK (164 aa)) enclose the SIS domain. Glu-85 (proton donor) is an active-site residue. Glu-116 is an active-site residue.

This sequence belongs to the GCKR-like family. MurNAc-6-P etherase subfamily. As to quaternary structure, homodimer.

It carries out the reaction N-acetyl-D-muramate 6-phosphate + H2O = N-acetyl-D-glucosamine 6-phosphate + (R)-lactate. It participates in amino-sugar metabolism; N-acetylmuramate degradation. Specifically catalyzes the cleavage of the D-lactyl ether substituent of MurNAc 6-phosphate, producing GlcNAc 6-phosphate and D-lactate. The polypeptide is N-acetylmuramic acid 6-phosphate etherase (Clostridium acetobutylicum (strain ATCC 824 / DSM 792 / JCM 1419 / IAM 19013 / LMG 5710 / NBRC 13948 / NRRL B-527 / VKM B-1787 / 2291 / W)).